We begin with the raw amino-acid sequence, 317 residues long: Acetyl-coenzyme A carboxylase carboxyl transferase subunit alpha (317 aa).

Residues Leu-40–Glu-293 form the CoA carboxyltransferase C-terminal domain.

This sequence belongs to the AccA family. In terms of assembly, acetyl-CoA carboxylase is a heterohexamer composed of biotin carboxyl carrier protein (AccB), biotin carboxylase (AccC) and two subunits each of ACCase subunit alpha (AccA) and ACCase subunit beta (AccD).

Its subcellular location is the cytoplasm. It catalyses the reaction N(6)-carboxybiotinyl-L-lysyl-[protein] + acetyl-CoA = N(6)-biotinyl-L-lysyl-[protein] + malonyl-CoA. It participates in lipid metabolism; malonyl-CoA biosynthesis; malonyl-CoA from acetyl-CoA: step 1/1. In terms of biological role, component of the acetyl coenzyme A carboxylase (ACC) complex. First, biotin carboxylase catalyzes the carboxylation of biotin on its carrier protein (BCCP) and then the CO(2) group is transferred by the carboxyltransferase to acetyl-CoA to form malonyl-CoA. The sequence is that of Acetyl-coenzyme A carboxylase carboxyl transferase subunit alpha from Sinorhizobium fredii (strain NBRC 101917 / NGR234).